A 294-amino-acid chain; its full sequence is Beta-lactamase (294 aa).

Positions 1-27 (MFKKRGRQTVLIAAVLAFFTASSPLLA) are cleaved as a signal peptide. S76 serves as the catalytic Acyl-ester intermediate. The active-site Proton acceptor is E174. Substrate is bound at residue 240–242 (KTG).

It belongs to the class-A beta-lactamase family.

It carries out the reaction a beta-lactam + H2O = a substituted beta-amino acid. This Citrobacter koseri (Citrobacter diversus) protein is Beta-lactamase.